We begin with the raw amino-acid sequence, 1396 residues long: DNA-directed RNA polymerase subunit beta' (1396 aa).

4 residues coordinate Zn(2+): Cys70, Cys72, Cys85, and Cys88. 3 residues coordinate Mg(2+): Asp460, Asp462, and Asp464. Zn(2+) is bound by residues Cys807, Cys881, Cys888, and Cys891. A compositionally biased stretch (acidic residues) spans 1361–1378 (EPEEIEEPVPEDLEDETA). Positions 1361–1396 (EPEEIEEPVPEDLEDETAGADSAQAASEESVAEGKD) are disordered. A compositionally biased stretch (low complexity) spans 1379-1389 (GADSAQAASEE).

Belongs to the RNA polymerase beta' chain family. In terms of assembly, the RNAP catalytic core consists of 2 alpha, 1 beta, 1 beta' and 1 omega subunit. When a sigma factor is associated with the core the holoenzyme is formed, which can initiate transcription. Mg(2+) is required as a cofactor. Requires Zn(2+) as cofactor.

The catalysed reaction is RNA(n) + a ribonucleoside 5'-triphosphate = RNA(n+1) + diphosphate. Functionally, DNA-dependent RNA polymerase catalyzes the transcription of DNA into RNA using the four ribonucleoside triphosphates as substrates. The sequence is that of DNA-directed RNA polymerase subunit beta' from Syntrophotalea carbinolica (strain DSM 2380 / NBRC 103641 / GraBd1) (Pelobacter carbinolicus).